We begin with the raw amino-acid sequence, 20 residues long: Alpha-1B-glycoprotein (20 aa).

The interval 1-20 (AVVFDPQPALWAEADTQLEP) is disordered.

As to quaternary structure, interacts with CRISP3. Glycosylated. In terms of tissue distribution, plasma.

It is found in the secreted. This Equus asinus (Donkey) protein is Alpha-1B-glycoprotein (A1BG).